We begin with the raw amino-acid sequence, 902 residues long: Androgen receptor (902 aa).

Positions 1-540 are modulating; that stretch reads MEVQLGLGRV…PIDYYFPPQK (540 aa). Positions 1–569 are interaction with ZNF318; that stretch reads MEVQLGLGRV…GSCKVFFKRA (569 aa). Disordered stretches follow at residues 35 to 146 and 194 to 224; these read QNPG…LSLL and QQEVISEGSSSVRAREATGAPSSSKDSYLGG. The residue at position 61 (Ser-61) is a Phosphoserine; by CDK9. Ser-75 bears the Phosphoserine mark. Over residues 94–103 the composition is skewed to low complexity; it reads QPSQQQSASE. Polar residues-rich tracts occupy residues 196-205 and 213-224; these read EVISEGSSSV and APSSSKDSYLGG. Residue Tyr-221 is modified to Phosphotyrosine; by CSK. Ser-254 carries the phosphoserine modification. Tyr-265 carries the phosphotyrosine; by CSK and TNK2 modification. The residue at position 290 (Ser-290) is a Phosphoserine. Residues Tyr-305, Tyr-344, Tyr-355, and Tyr-360 each carry the phosphotyrosine; by CSK modification. The residue at position 361 (Tyr-361) is a Phosphotyrosine; by CSK and TNK2. Lys-384 is covalently cross-linked (Glycyl lysine isopeptide (Lys-Gly) (interchain with G-Cter in SUMO)). A Phosphotyrosine; by CSK modification is found at Tyr-391. The segment at 439 to 465 is disordered; it reads EGQLYGPGGGGGSSSPSDAGPVAPYGY. Lys-503 participates in a covalent cross-link: Glycyl lysine isopeptide (Lys-Gly) (interchain with G-Cter in SUMO). Phosphotyrosine; by CSK is present on residues Tyr-517 and Tyr-534. The tract at residues 534–901 is interaction with LPXN; that stretch reads YYFPPQKTCL…GKVKPIYFHT (368 aa). A DNA-binding region (nuclear receptor) is located at residues 541–614; the sequence is TCLICGDEAS…AGMTLGARKL (74 aa). 2 NR C4-type zinc fingers span residues 542–562 and 578–602; these read CLICGDEASGCHYGALTCGSC and CASRNDCTIDKFRRKNCPSCRLRKC. Positions 554 to 644 are interaction with HIPK3; the sequence is YGALTCGSCK…TEDPSQKMTV (91 aa). The interval 574-901 is interaction with CCAR1; that stretch reads QKYLCASRND…GKVKPIYFHT (328 aa). An interaction with KAT7 region spans residues 607–901; the sequence is MTLGARKLKK…GKVKPIYFHT (295 aa). Ser-633 bears the Phosphoserine mark. The NR LBD domain maps to 651–882; sequence ECQPIFLNVL…DFPEMMAEII (232 aa). Asn-688 and Arg-735 together coordinate 17beta-hydroxy-5alpha-androstan-3-one. Residues Lys-828 and Lys-830 each participate in a glycyl lysine isopeptide (Lys-Gly) (interchain with G-Cter in ubiquitin) cross-link. Thr-860 provides a ligand contact to 17beta-hydroxy-5alpha-androstan-3-one. The residue at position 898 (Tyr-898) is a Phosphotyrosine; by CSK.

It belongs to the nuclear hormone receptor family. NR3 subfamily. In terms of assembly, binds DNA as a homodimer. Part of a ternary complex containing AR, EFCAB6/DJBP and PARK7. Interacts with HIPK3 and NR0B2 in the presence of androgen. The ligand binding domain interacts with KAT7/HBO1 in the presence of dihydrotestosterone. Interacts with EFCAB6/DJBP, PQBP1, RANBP9, RBAK, SPDEF, SRA1, TGFB1I1, ZNF318 and RREB1. Interacts with ZMIZ1/ZIMP10 and ZMIZ2/ZMIP7 which both enhance its transactivation activity. Interacts with SLC30A9 and RAD54L2/ARIP4. Interacts with MACROD1 (via macro domain). Interacts via the ligand-binding domain with LXXLL and FXXLF motifs from NCOA1, NCOA2, NCOA3 and MAGEA11. Interacts (via nuclear receptor DNA binding domain and nuclear receptor ligand binding domain) with NCOA4. The AR N-terminal poly-Gln region binds Ran resulting in enhancement of AR-mediated transactivation. Ran-binding decreases as the poly-Gln length increases. Interacts with HIP1 (via coiled coil domain). Interacts (via ligand-binding domain) with TRIM68. Interacts with TNK2. Interacts with USP26. Interacts with RNF6. Interacts (regulated by RNF6 probably through polyubiquitination) with RNF14; regulates AR transcriptional activity. Interacts with PRMT2 and TRIM24. Interacts with RACK1. Interacts with RANBP10; this interaction enhances dihydrotestosterone-induced AR transcriptional activity. Interacts with PRPF6 in a hormone-independent way; this interaction enhances dihydrotestosterone-induced AR transcriptional activity. Interacts with STK4/MST1. Interacts with ZIPK/DAPK3. Interacts with LPXN. Interacts with MAK. Part of a complex containing AR, MAK and NCOA3. Interacts with CRY1. Interacts with CCAR1 and GATA2. Interacts with BUD31. Interacts with ARID4A. Interacts with ARID4B. Interacts (via NR LBD domain) with ZBTB7A; the interaction is direct and androgen-dependent. Interacts with NCOR1. Interacts with NCOR2. Interacts with CRY2 in a ligand-dependent manner. In terms of processing, phosphorylated in prostate cancer cells in response to several growth factors including EGF. Phosphorylation is induced by c-Src kinase (CSK). Tyr-517 is one of the major phosphorylation sites and an increase in phosphorylation and Src kinase activity is associated with prostate cancer progression. Phosphorylation by TNK2 enhances the DNA-binding and transcriptional activity. Phosphorylation at Ser-61 by CDK9 regulates AR promoter selectivity and cell growth. Phosphorylation by PAK6 leads to AR-mediated transcription inhibition. Sumoylated on Lys-384 (major) and Lys-503. Ubiquitinated. Deubiquitinated by USP26. 'Lys-6' and 'Lys-27'-linked polyubiquitination by RNF6 modulates AR transcriptional activity and specificity. Post-translationally, palmitoylated by ZDHHC7 and ZDHHC21. Palmitoylation is required for plasma membrane targeting and for rapid intracellular signaling via ERK and AKT kinases and cAMP generation. As to expression, highest levels in the seminal vesicle, ventral prostate and coagulating gland with lower levels in the kidney and levator ani muscle.

It is found in the nucleus. Its subcellular location is the cytoplasm. In terms of biological role, steroid hormone receptors are ligand-activated transcription factors that regulate eukaryotic gene expression and affect cellular proliferation and differentiation in target tissues. Transcription factor activity is modulated by bound coactivator and corepressor proteins like ZBTB7A that recruits NCOR1 and NCOR2 to the androgen response elements/ARE on target genes, negatively regulating androgen receptor signaling and androgen-induced cell proliferation. Transcription activation is also down-regulated by NR0B2. Activated, but not phosphorylated, by HIPK3 and ZIPK/DAPK3. The polypeptide is Androgen receptor (Ar) (Rattus norvegicus (Rat)).